The primary structure comprises 437 residues: tRNA-2-methylthio-N(6)-dimethylallyladenosine synthase (437 aa).

An MTTase N-terminal domain is found at 2-117; that stretch reads KHLYIKTFGC…LPQMIQRALD (116 aa). Residues Cys11, Cys48, Cys80, Cys154, Cys158, and Cys161 each coordinate [4Fe-4S] cluster. The region spanning 140 to 372 is the Radical SAM core domain; sequence RAQGVVGQVT…QQLLNTQQLQ (233 aa). One can recognise a TRAM domain in the interval 375–437; the sequence is KARVGRRESV…LPNSLRGRLV (63 aa).

This sequence belongs to the methylthiotransferase family. MiaB subfamily. As to quaternary structure, monomer. [4Fe-4S] cluster is required as a cofactor.

The protein localises to the cytoplasm. It catalyses the reaction N(6)-dimethylallyladenosine(37) in tRNA + (sulfur carrier)-SH + AH2 + 2 S-adenosyl-L-methionine = 2-methylsulfanyl-N(6)-dimethylallyladenosine(37) in tRNA + (sulfur carrier)-H + 5'-deoxyadenosine + L-methionine + A + S-adenosyl-L-homocysteine + 2 H(+). Its function is as follows. Catalyzes the methylthiolation of N6-(dimethylallyl)adenosine (i(6)A), leading to the formation of 2-methylthio-N6-(dimethylallyl)adenosine (ms(2)i(6)A) at position 37 in tRNAs that read codons beginning with uridine. The protein is tRNA-2-methylthio-N(6)-dimethylallyladenosine synthase of Magnetococcus marinus (strain ATCC BAA-1437 / JCM 17883 / MC-1).